Reading from the N-terminus, the 77-residue chain is Large ribosomal subunit protein uL24 (77 aa).

Positions 42 to 61 (KKHQKPSQTNANGGVVESEG) are disordered.

This sequence belongs to the universal ribosomal protein uL24 family. Part of the 50S ribosomal subunit.

Its function is as follows. One of two assembly initiator proteins, it binds directly to the 5'-end of the 23S rRNA, where it nucleates assembly of the 50S subunit. In terms of biological role, one of the proteins that surrounds the polypeptide exit tunnel on the outside of the subunit. The polypeptide is Large ribosomal subunit protein uL24 (Lactobacillus helveticus (strain DPC 4571)).